We begin with the raw amino-acid sequence, 504 residues long: Catalase (504 aa).

The first 21 residues, 1–21 (MQMSKSFLLITVGLASTSLQA), serve as a signal peptide directing secretion. Active-site residues include histidine 72 and asparagine 145. Position 353 (tyrosine 353) interacts with heme.

It belongs to the catalase family. Heme is required as a cofactor.

The protein resides in the periplasm. The enzyme catalyses 2 H2O2 = O2 + 2 H2O. In terms of biological role, decomposes hydrogen peroxide into water and oxygen; serves to protect cells from the toxic effects of hydrogen peroxide. The protein is Catalase of Vibrio parahaemolyticus serotype O3:K6 (strain RIMD 2210633).